A 698-amino-acid chain; its full sequence is Macrophomene synthase (698 aa).

The interval 21–340 (MEYMYSVPLD…SCDRYSSYRR (320 aa)) is terpene cyclase. Asp-113 lines the Mg(2+) pocket. The DDXXD 1 motif lies at 113–117 (DNIAE). The short motif at 242–250 (NDFFSFNYE) is the NSE/DTE element. A prenyltransferase region spans residues 341 to 696 (EKHQMELPIR…IQLALERLRI (356 aa)). Residues 368–387 (LPNGKQLDAPTESSGKDLSD) form a disordered region. Isopentenyl diphosphate contacts are provided by Lys-417, Arg-420, and His-449. Asp-456 and Asp-460 together coordinate Mg(2+). Residues 456 to 460 (DDIED) carry the DDXXD 2 motif. Arg-465 contributes to the dimethylallyl diphosphate binding site. Residue Arg-466 participates in isopentenyl diphosphate binding. Dimethylallyl diphosphate contacts are provided by Lys-543, Thr-544, Gln-579, Asn-586, Lys-596, and Lys-606.

It in the N-terminal section; belongs to the terpene synthase family. This sequence in the C-terminal section; belongs to the FPP/GGPP synthase family. In terms of assembly, hexamer. Mg(2+) serves as cofactor.

The enzyme catalyses 5 isopentenyl diphosphate + dimethylallyl diphosphate = all-trans-hexaprenyl diphosphate + 5 diphosphate. It catalyses the reaction all-trans-hexaprenyl diphosphate = macrophomene + diphosphate. Its function is as follows. Bifunctional terpene synthase that converts dimethylallyl diphosphate (DMAPP) and isopentenyl diphosphate (IPP) into macrophomene as a single product. The C-terminal prenyltransferase (PT) domain of MpMS catalyzes formation of hexaprenyl diphosphate (HexPP), whereas the N-terminal terpene cyclase (TC) domain catalyzes the cyclization of HexPP to macrophomene. In Macrophomina phaseolina (strain MS6) (Charcoal rot fungus), this protein is Macrophomene synthase.